The chain runs to 260 residues: 1-(5-phosphoribosyl)-5-[(5-phosphoribosylamino)methylideneamino] imidazole-4-carboxamide isomerase (260 aa).

Aspartate 8 serves as the catalytic Proton acceptor. The active-site Proton donor is the aspartate 130.

It belongs to the HisA/HisF family.

It is found in the cytoplasm. The catalysed reaction is 1-(5-phospho-beta-D-ribosyl)-5-[(5-phospho-beta-D-ribosylamino)methylideneamino]imidazole-4-carboxamide = 5-[(5-phospho-1-deoxy-D-ribulos-1-ylimino)methylamino]-1-(5-phospho-beta-D-ribosyl)imidazole-4-carboxamide. Its pathway is amino-acid biosynthesis; L-histidine biosynthesis; L-histidine from 5-phospho-alpha-D-ribose 1-diphosphate: step 4/9. This is 1-(5-phosphoribosyl)-5-[(5-phosphoribosylamino)methylideneamino] imidazole-4-carboxamide isomerase from Chlorobaculum tepidum (strain ATCC 49652 / DSM 12025 / NBRC 103806 / TLS) (Chlorobium tepidum).